We begin with the raw amino-acid sequence, 490 residues long: Betaine aldehyde dehydrogenase (490 aa).

K(+) contacts are provided by threonine 26, isoleucine 27, and aspartate 93. 150–152 contributes to the NAD(+) binding site; that stretch reads GAW. Lysine 162 (charge relay system) is an active-site residue. Residue 176–179 participates in NAD(+) binding; it reads KPSE. Valine 180 is a binding site for K(+). An NAD(+)-binding site is contributed by 230–233; the sequence is GVAS. Leucine 246 serves as a coordination point for K(+). Glutamate 252 functions as the Proton acceptor in the catalytic mechanism. 3 residues coordinate NAD(+): glycine 254, cysteine 286, and glutamate 387. Cysteine 286 serves as the catalytic Nucleophile. Position 286 is a cysteine sulfenic acid (-SOH) (cysteine 286). K(+) is bound by residues lysine 457 and glycine 460. Glutamate 464 functions as the Charge relay system in the catalytic mechanism.

This sequence belongs to the aldehyde dehydrogenase family. Dimer of dimers. Requires K(+) as cofactor.

The catalysed reaction is betaine aldehyde + NAD(+) + H2O = glycine betaine + NADH + 2 H(+). It functions in the pathway amine and polyamine biosynthesis; betaine biosynthesis via choline pathway; betaine from betaine aldehyde: step 1/1. In terms of biological role, involved in the biosynthesis of the osmoprotectant glycine betaine. Catalyzes the irreversible oxidation of betaine aldehyde to the corresponding acid. The polypeptide is Betaine aldehyde dehydrogenase (Shigella flexneri serotype 5b (strain 8401)).